The chain runs to 452 residues: uncharacterized protein (452 aa).

Its subcellular location is the cytoplasm. It localises to the nucleus. This is an uncharacterized protein from Schizosaccharomyces pombe (strain 972 / ATCC 24843) (Fission yeast).